Here is a 109-residue protein sequence, read N- to C-terminus: Protein AC78 (109 aa).

Residues 61–81 traverse the membrane as a helical segment; it reads GIIILISVVAFIALFLLLYVI.

Its subcellular location is the host membrane. It is found in the virion. Functionally, plays an essential role in budded virus production and occlusion body formation. In Autographa californica nuclear polyhedrosis virus (AcMNPV), this protein is Protein AC78 (AC78).